A 158-amino-acid chain; its full sequence is UPF0178 protein RPA2191 (158 aa).

The protein belongs to the UPF0178 family.

The sequence is that of UPF0178 protein RPA2191 from Rhodopseudomonas palustris (strain ATCC BAA-98 / CGA009).